Consider the following 162-residue polypeptide: Interleukin-15 (162 aa).

Positions 1–29 are cleaved as a signal peptide; it reads MRISKPHLRSISIQCYLCLLLKSHFLTEA. The propeptide occupies 30-48; the sequence is GIHVFILGCFSAGLPKTEA. Cystine bridges form between Cys-83–Cys-133 and Cys-90–Cys-136. Asn-127 is a glycosylation site (N-linked (GlcNAc...) asparagine).

Belongs to the IL-15/IL-21 family.

The protein localises to the secreted. Cytokine that plays a major role in the development of inflammatory and protective immune responses to microbial invaders and parasites by modulating immune cells of both the innate and adaptive immune systems. Stimulates the proliferation of natural killer cells, T-cells and B-cells and promotes the secretion of several cytokines. In monocytes, induces the production of IL8 and monocyte chemotactic protein 1/CCL2, two chemokines that attract neutrophils and monocytes respectively to sites of infection. Unlike most cytokines, which are secreted in soluble form, IL15 is expressed in association with its high affinity IL15RA on the surface of IL15-producing cells and delivers signals to target cells that express IL2RB and IL2RG receptor subunits. Binding to its receptor triggers the phosphorylation of JAK1 and JAK3 and the recruitment and subsequent phosphorylation of signal transducer and activator of transcription-3/STAT3 and STAT5. In mast cells, induces the rapid tyrosine phosphorylation of STAT6 and thereby controls mast cell survival and release of cytokines such as IL4. The chain is Interleukin-15 (IL15) from Chlorocebus aethiops (Green monkey).